The primary structure comprises 111 residues: MFSRVMFCTFLILPLLAAATAIPRTDTPSCSTGSLQCCSSVQKASDPLVGIIVALLGIVLGPLDLNVGLTCSPITVIGVGGTSCTQQTVCCTGNNFDGLIVAGCSPINIGL.

The signal sequence occupies residues 1–21 (MFSRVMFCTFLILPLLAAATA). 4 disulfide bridges follow: Cys30–Cys90, Cys37–Cys84, Cys38–Cys71, and Cys91–Cys104.

Belongs to the fungal hydrophobin family. As to quaternary structure, self-assembles to form functional amyloid fibrils called rodlets. Self-assembly into fibrillar rodlets occurs spontaneously at hydrophobic:hydrophilic interfaces and the rodlets further associate laterally to form amphipathic monolayers. Behavior depends on environmental conditions: (1) when the pH increases or in the presence of Ca(2+) ions, an assembled state, beta-sheet rich, is formed; (2) when the solvent polarity increases, the vhm2 shows an increased tendency to reach hydrophobic/hydrophilic interfaces, with no detectable conformational change; and (3) at high temperature, a reversible conformational change and reversible aggregation occur. The physical and chemical properties, both in solution and as a biofilm, are affected by polysaccharides that act as hydrophilic stabilizer.

Its subcellular location is the secreted. It is found in the cell wall. In terms of biological role, aerial growth, conidiation, and dispersal of filamentous fungi in the environment rely upon a capability of their secreting small amphipathic proteins called hydrophobins (HPBs) with low sequence identity. Class I can self-assemble into an outermost layer of rodlet bundles on aerial cell surfaces, conferring cellular hydrophobicity that supports fungal growth, development and dispersal; whereas Class II form highly ordered films at water-air interfaces through intermolecular interactions but contribute nothing to the rodlet structure. Vmh2 is a class I hydrophobin involved in biofilm formation and is essential for the maintenance of the surface hydrophobicity of the mycelium. Seems not to be involved in hyphal resistance against environmental stress. The chain is Class I hydrophobin 2 from Pleurotus ostreatus (strain PC15) (Oyster mushroom).